A 618-amino-acid chain; its full sequence is uncharacterized protein (618 aa).

The segment at residues 18–47 (SCQRCRQRKIKCDRLHPCFQCVKSNSQCFY) is a DNA-binding region (zn(2)-C6 fungal-type). Ser-598 is modified (phosphoserine).

It is found in the nucleus. This is an uncharacterized protein from Schizosaccharomyces pombe (strain 972 / ATCC 24843) (Fission yeast).